The following is a 74-amino-acid chain: Protein YkgV (74 aa).

The chain is Protein YkgV from Escherichia coli (strain K12).